A 486-amino-acid chain; its full sequence is UDP-N-acetylmuramoyl-L-alanyl-D-glutamate--2,6-diaminopimelate ligase (486 aa).

Ser31 contacts UDP-N-acetyl-alpha-D-muramoyl-L-alanyl-D-glutamate. Gly109–Thr115 provides a ligand contact to ATP. UDP-N-acetyl-alpha-D-muramoyl-L-alanyl-D-glutamate is bound by residues Asn150, Thr151–Thr152, Ser178, and Arg186. At Lys218 the chain carries N6-carboxylysine. Residues Arg381, Asp405–Arg408, Gly455, and Glu459 contribute to the meso-2,6-diaminopimelate site. Positions Asp405–Arg408 match the Meso-diaminopimelate recognition motif motif.

It belongs to the MurCDEF family. MurE subfamily. It depends on Mg(2+) as a cofactor. Carboxylation is probably crucial for Mg(2+) binding and, consequently, for the gamma-phosphate positioning of ATP.

The protein resides in the cytoplasm. It carries out the reaction UDP-N-acetyl-alpha-D-muramoyl-L-alanyl-D-glutamate + meso-2,6-diaminopimelate + ATP = UDP-N-acetyl-alpha-D-muramoyl-L-alanyl-gamma-D-glutamyl-meso-2,6-diaminopimelate + ADP + phosphate + H(+). It functions in the pathway cell wall biogenesis; peptidoglycan biosynthesis. Its function is as follows. Catalyzes the addition of meso-diaminopimelic acid to the nucleotide precursor UDP-N-acetylmuramoyl-L-alanyl-D-glutamate (UMAG) in the biosynthesis of bacterial cell-wall peptidoglycan. The polypeptide is UDP-N-acetylmuramoyl-L-alanyl-D-glutamate--2,6-diaminopimelate ligase (Halalkalibacterium halodurans (strain ATCC BAA-125 / DSM 18197 / FERM 7344 / JCM 9153 / C-125) (Bacillus halodurans)).